The sequence spans 686 residues: DNA ligase (686 aa).

NAD(+)-binding positions include 45 to 49 (DNEYD), 94 to 95 (SL), and Glu127. Catalysis depends on Lys129, which acts as the N6-AMP-lysine intermediate. Arg150, Glu187, Lys302, and Lys326 together coordinate NAD(+). The Zn(2+) site is built by Cys420, Cys423, Cys438, and Cys444. The BRCT domain maps to 605–686 (LDNLPLEGQT…DEFLKMIGAS (82 aa)).

It belongs to the NAD-dependent DNA ligase family. LigA subfamily. It depends on Mg(2+) as a cofactor. Mn(2+) serves as cofactor.

The catalysed reaction is NAD(+) + (deoxyribonucleotide)n-3'-hydroxyl + 5'-phospho-(deoxyribonucleotide)m = (deoxyribonucleotide)n+m + AMP + beta-nicotinamide D-nucleotide.. In terms of biological role, DNA ligase that catalyzes the formation of phosphodiester linkages between 5'-phosphoryl and 3'-hydroxyl groups in double-stranded DNA using NAD as a coenzyme and as the energy source for the reaction. It is essential for DNA replication and repair of damaged DNA. In Psychrobacter sp. (strain PRwf-1), this protein is DNA ligase.